The primary structure comprises 91 residues: Protein LURE 1.6 (91 aa).

The first 20 residues, 1–20 (MKLPFIFLITLLIFVSSCTS), serve as a signal peptide directing secretion. Cystine bridges form between Cys-59–Cys-76, Cys-62–Cys-83, and Cys-66–Cys-85.

This sequence belongs to the DEFL family. As to expression, expressed in the pistil. Detected in the synergid cells.

The protein resides in the secreted. Pollen tube attractants guiding pollen tubes to the ovular micropyle. This Arabidopsis thaliana (Mouse-ear cress) protein is Protein LURE 1.6.